The sequence spans 324 residues: 4-diphosphocytidyl-2-C-methyl-D-erythritol kinase (324 aa).

Residue K11 is part of the active site. 108-118 (PIGAGLAGGST) contacts ATP. D150 is a catalytic residue.

This sequence belongs to the GHMP kinase family. IspE subfamily.

It carries out the reaction 4-CDP-2-C-methyl-D-erythritol + ATP = 4-CDP-2-C-methyl-D-erythritol 2-phosphate + ADP + H(+). It participates in isoprenoid biosynthesis; isopentenyl diphosphate biosynthesis via DXP pathway; isopentenyl diphosphate from 1-deoxy-D-xylulose 5-phosphate: step 3/6. Its function is as follows. Catalyzes the phosphorylation of the position 2 hydroxy group of 4-diphosphocytidyl-2C-methyl-D-erythritol. The sequence is that of 4-diphosphocytidyl-2-C-methyl-D-erythritol kinase from Cyanothece sp. (strain PCC 7425 / ATCC 29141).